The chain runs to 316 residues: Cysteine synthase (316 aa).

Hydrogen sulfide-binding residues include Asn7 and Arg35. N6-(pyridoxal phosphate)lysine is present on Lys42. Pyridoxal 5'-phosphate-binding positions include Asn72 and 177 to 181 (GTGGS). Leu268 contacts hydrogen sulfide. Ser272 is a pyridoxal 5'-phosphate binding site.

Belongs to the cysteine synthase/cystathionine beta-synthase family. As to quaternary structure, homodimer. The cofactor is pyridoxal 5'-phosphate.

The catalysed reaction is O-acetyl-L-serine + hydrogen sulfide = L-cysteine + acetate. It participates in amino-acid biosynthesis; L-cysteine biosynthesis; L-cysteine from L-serine: step 2/2. The protein is Cysteine synthase (cysK) of Haemophilus influenzae (strain ATCC 51907 / DSM 11121 / KW20 / Rd).